Here is a 178-residue protein sequence, read N- to C-terminus: Large ribosomal subunit protein uL6 (178 aa).

Over residues 155–169 (PYKGKGIKYDNEQIR) the composition is skewed to basic and acidic residues. Residues 155 to 178 (PYKGKGIKYDNEQIRRKAGKSGGK) are disordered.

This sequence belongs to the universal ribosomal protein uL6 family. Part of the 50S ribosomal subunit.

Functionally, this protein binds to the 23S rRNA, and is important in its secondary structure. It is located near the subunit interface in the base of the L7/L12 stalk, and near the tRNA binding site of the peptidyltransferase center. The sequence is that of Large ribosomal subunit protein uL6 from Nitratidesulfovibrio vulgaris (strain DSM 19637 / Miyazaki F) (Desulfovibrio vulgaris).